Reading from the N-terminus, the 359-residue chain is 3-dehydroquinate synthase (359 aa).

Residues 72-77, 106-110, 130-131, Lys143, Lys152, and 170-173 contribute to the NAD(+) site; these read DGEQYK, GVIGD, TT, and CLKT. Residues Glu185, His248, and His265 each contribute to the Zn(2+) site.

Belongs to the sugar phosphate cyclases superfamily. Dehydroquinate synthase family. It depends on Co(2+) as a cofactor. The cofactor is Zn(2+). NAD(+) is required as a cofactor.

It localises to the cytoplasm. It catalyses the reaction 7-phospho-2-dehydro-3-deoxy-D-arabino-heptonate = 3-dehydroquinate + phosphate. The protein operates within metabolic intermediate biosynthesis; chorismate biosynthesis; chorismate from D-erythrose 4-phosphate and phosphoenolpyruvate: step 2/7. In terms of biological role, catalyzes the conversion of 3-deoxy-D-arabino-heptulosonate 7-phosphate (DAHP) to dehydroquinate (DHQ). This is 3-dehydroquinate synthase from Photobacterium profundum (strain SS9).